A 393-amino-acid chain; its full sequence is F-box/kelch-repeat protein At4g19865 (393 aa).

The segment at 1 to 30 (MNFQVEPPEKKKTKNSSPPHSPPSSSSPSL) is disordered. In terms of domain architecture, F-box spans 27–73 (SPSLSLLPEEIVVHCLARISRLYYPTLSLVSKSFRSILSSTELYATR). Kelch repeat units follow at residues 148 to 190 (EIYV…FHDG), 191 to 237 (KIYV…RSGV), 239 to 272 (EGKI…ALRS), and 273 to 320 (ECMI…GGSS).

This Arabidopsis thaliana (Mouse-ear cress) protein is F-box/kelch-repeat protein At4g19865.